Consider the following 730-residue polypeptide: Ribosomal RNA large subunit methyltransferase K/L (730 aa).

The THUMP domain occupies 46 to 157; sequence TAYRLCVWSR…RGEAILSLDL (112 aa). Positions 394–418 are disordered; the sequence is GERREAQPEGTEARQQVPQASEPAR.

It belongs to the methyltransferase superfamily. RlmKL family.

It is found in the cytoplasm. It catalyses the reaction guanosine(2445) in 23S rRNA + S-adenosyl-L-methionine = N(2)-methylguanosine(2445) in 23S rRNA + S-adenosyl-L-homocysteine + H(+). The enzyme catalyses guanosine(2069) in 23S rRNA + S-adenosyl-L-methionine = N(2)-methylguanosine(2069) in 23S rRNA + S-adenosyl-L-homocysteine + H(+). In terms of biological role, specifically methylates the guanine in position 2445 (m2G2445) and the guanine in position 2069 (m7G2069) of 23S rRNA. This Pseudomonas putida (strain ATCC 47054 / DSM 6125 / CFBP 8728 / NCIMB 11950 / KT2440) protein is Ribosomal RNA large subunit methyltransferase K/L.